Here is a 753-residue protein sequence, read N- to C-terminus: Polyribonucleotide nucleotidyltransferase (753 aa).

Residues aspartate 488 and aspartate 494 each coordinate Mg(2+). Positions proline 555 to isoleucine 614 constitute a KH domain. The S1 motif domain maps to glycine 624 to lysine 692. The segment at lysine 692–glutamine 753 is disordered. The segment covering alanine 699–glycine 739 has biased composition (basic and acidic residues).

The protein belongs to the polyribonucleotide nucleotidyltransferase family. Requires Mg(2+) as cofactor.

Its subcellular location is the cytoplasm. The catalysed reaction is RNA(n+1) + phosphate = RNA(n) + a ribonucleoside 5'-diphosphate. Its function is as follows. Involved in mRNA degradation. Catalyzes the phosphorolysis of single-stranded polyribonucleotides processively in the 3'- to 5'-direction. The chain is Polyribonucleotide nucleotidyltransferase from Delftia acidovorans (strain DSM 14801 / SPH-1).